Here is a 515-residue protein sequence, read N- to C-terminus: Putative cytochrome P450 CYP13A2 (515 aa).

Cys-460 is a heme binding site.

The protein belongs to the cytochrome P450 family. It depends on heme as a cofactor.

Functionally, cytochromes P450 are a group of heme-thiolate monooxygenases. They oxidize a variety of structurally unrelated compounds, including steroids, fatty acids, and xenobiotics. This is Putative cytochrome P450 CYP13A2 (cyp-13A2) from Caenorhabditis elegans.